A 326-amino-acid chain; its full sequence is UDP-N-acetylglucosamine transporter (326 aa).

Helical transmembrane passes span 4-24 (NLKYLSLGILVFQTTSLVLTM), 38-58 (LSSTAVVVAEFLKIMACIFLV), 136-156 (LGVYQWLSLVILMAGVAFVQW), 174-194 (FVGLMAVLTACFSSGFAGVYF), 212-232 (LGFFGSIFGLMGVYVYDGELV), 243-263 (QLTWIVVALQALGGLVIAAVI), 269-289 (ILKGFATSLSIILSTIISYFW), and 293-313 (FVPTSVFFLGAILVIAATFLY).

This sequence belongs to the nucleotide-sugar transporter family. SLC35A subfamily. Interacts with SLC35A2; the interaction is reduced in the presence of SLC35A4. Found in a complex with SLC35A2 and SLC35A4. Interacts with MGAT4B. O-Glcnacylation regulates the stability of SLC35A3 and the specific complex formation with MGAT4B.

Its subcellular location is the golgi apparatus membrane. It carries out the reaction UMP(out) + UDP-N-acetyl-alpha-D-glucosamine(in) = UMP(in) + UDP-N-acetyl-alpha-D-glucosamine(out). In terms of biological role, transports diphosphate-N-acetylglucosamine (UDP-GlcNAc) from the cytosol into the lumen of the Golgi apparatus, functioning as an antiporter that exchanges UDP-N-acetyl-alpha-D-glucosamine for UMP. May supply UDP-GlcNAc as substrate for Golgi-resident glycosyltransferases that generate highly branched, multiantennary complex N-glycans and keratan sulfate. However, the exact role of SLC35A3 still needs to be elucidated, it could be a member of a catalytically more efficient multiprotein complex rather than function independently as a single transporter. The polypeptide is UDP-N-acetylglucosamine transporter (Slc35a3) (Mus musculus (Mouse)).